A 361-amino-acid polypeptide reads, in one-letter code: S-adenosylmethionine:tRNA ribosyltransferase-isomerase (361 aa).

It belongs to the QueA family. In terms of assembly, monomer.

Its subcellular location is the cytoplasm. It catalyses the reaction 7-aminomethyl-7-carbaguanosine(34) in tRNA + S-adenosyl-L-methionine = epoxyqueuosine(34) in tRNA + adenine + L-methionine + 2 H(+). Its pathway is tRNA modification; tRNA-queuosine biosynthesis. In terms of biological role, transfers and isomerizes the ribose moiety from AdoMet to the 7-aminomethyl group of 7-deazaguanine (preQ1-tRNA) to give epoxyqueuosine (oQ-tRNA). This Methylocella silvestris (strain DSM 15510 / CIP 108128 / LMG 27833 / NCIMB 13906 / BL2) protein is S-adenosylmethionine:tRNA ribosyltransferase-isomerase.